The chain runs to 120 residues: Protein GP96 (120 aa).

It belongs to the herpesviridae UL96 family.

The protein is Protein GP96 of Cavia porcellus (Guinea pig).